The chain runs to 238 residues: Glycerol-3-phosphate acyltransferase (238 aa).

Transmembrane regions (helical) follow at residues 5 to 25, 61 to 81, 88 to 108, 125 to 145, 149 to 169, and 194 to 214; these read VIFG…SINF, FLVF…SAIL, FGAV…VFPI, IASL…AMIF, IVSL…IIPW, and AWYL…FTHI.

The protein belongs to the PlsY family. As to quaternary structure, probably interacts with PlsX.

It is found in the cell membrane. The catalysed reaction is an acyl phosphate + sn-glycerol 3-phosphate = a 1-acyl-sn-glycero-3-phosphate + phosphate. It participates in lipid metabolism; phospholipid metabolism. Its function is as follows. Catalyzes the transfer of an acyl group from acyl-phosphate (acyl-PO(4)) to glycerol-3-phosphate (G3P) to form lysophosphatidic acid (LPA). This enzyme utilizes acyl-phosphate as fatty acyl donor, but not acyl-CoA or acyl-ACP. This Mycoplasma mobile (strain ATCC 43663 / 163K / NCTC 11711) (Mesomycoplasma mobile) protein is Glycerol-3-phosphate acyltransferase.